Consider the following 417-residue polypeptide: Ig-like V-type domain-containing protein FAM187A (417 aa).

An N-terminal signal peptide occupies residues 1–18; it reads MSLAHTTVLLWAWGSLQA. Over 19–377 the chain is Extracellular; that stretch reads FEIVEKESVF…ASLSDPETRT (359 aa). N-linked (GlcNAc...) asparagine glycosylation is found at asparagine 248 and asparagine 318. Positions 268 to 362 constitute an Ig-like V-type domain; sequence PWVPQVPIQF…IAGFRLGVIT (95 aa). Cysteine 290 and cysteine 346 are oxidised to a cystine. A helical transmembrane segment spans residues 378 to 398; sequence AIELTLMGYLLITIFFITIHL. Residues 399–417 are Cytoplasmic-facing; the sequence is CRCCCQSRCCPNFSAQTLL.

Belongs to the FAM187 family.

It localises to the membrane. This is Ig-like V-type domain-containing protein FAM187A (Fam187a) from Mus musculus (Mouse).